Consider the following 634-residue polypeptide: uncharacterized protein (634 aa).

The signal sequence occupies residues 1–40 (MWLQQRLKGLPGLLSSSWARRLLCLLGLLVLLLWFAGSGA). Over 41 to 589 (RRAAGGLQLL…DEHMAQQDPG (549 aa)) the chain is Extracellular. N-linked (GlcNAc...) asparagine glycosylation occurs at Asn363. Residues 590–610 (LPFLFWFSVASLITLFHLFLF) traverse the membrane as a helical segment. The Cytoplasmic segment spans residues 611–634 (KLIYNEYCGPGAKPFFRNKEDPSV).

It localises to the membrane. This is an uncharacterized protein from Bos taurus (Bovine).